A 269-amino-acid polypeptide reads, in one-letter code: tRNA (guanine-N(1)-)-methyltransferase (269 aa).

Residues glycine 115 and 139–144 (LGDYVL) contribute to the S-adenosyl-L-methionine site.

It belongs to the RNA methyltransferase TrmD family. In terms of assembly, homodimer.

The protein localises to the cytoplasm. It catalyses the reaction guanosine(37) in tRNA + S-adenosyl-L-methionine = N(1)-methylguanosine(37) in tRNA + S-adenosyl-L-homocysteine + H(+). Its function is as follows. Specifically methylates guanosine-37 in various tRNAs. The protein is tRNA (guanine-N(1)-)-methyltransferase of Pseudarthrobacter chlorophenolicus (strain ATCC 700700 / DSM 12829 / CIP 107037 / JCM 12360 / KCTC 9906 / NCIMB 13794 / A6) (Arthrobacter chlorophenolicus).